The sequence spans 594 residues: Glutamate decarboxylase 1 (594 aa).

The segment covering 1-13 (MASSTPSSSATSS) has biased composition (low complexity). Residues 1–23 (MASSTPSSSATSSNAGADPNTTN) form a disordered region. At S78 the chain carries Phosphoserine. 190 to 192 (QLS) lines the 4-aminobutanoate pocket. K405 carries the post-translational modification N6-(pyridoxal phosphate)lysine. R567 lines the 4-aminobutanoate pocket.

Belongs to the group II decarboxylase family. Homodimer. It depends on pyridoxal 5'-phosphate as a cofactor.

It carries out the reaction L-glutamate + H(+) = 4-aminobutanoate + CO2. Catalyzes the synthesis of the inhibitory neurotransmitter gamma-aminobutyric acid (GABA) with pyridoxal 5'-phosphate as cofactor. This chain is Glutamate decarboxylase 1 (GAD1), found in Pongo abelii (Sumatran orangutan).